A 220-amino-acid chain; its full sequence is Thiamine-phosphate synthase (220 aa).

4-amino-2-methyl-5-(diphosphooxymethyl)pyrimidine is bound by residues 47–51 and Asn-78; that span reads QYREK. Asp-79 and Asp-98 together coordinate Mg(2+). Ser-117 serves as a coordination point for 4-amino-2-methyl-5-(diphosphooxymethyl)pyrimidine. Residue 143 to 145 coordinates 2-[(2R,5Z)-2-carboxy-4-methylthiazol-5(2H)-ylidene]ethyl phosphate; it reads TAT. Residue Lys-146 participates in 4-amino-2-methyl-5-(diphosphooxymethyl)pyrimidine binding. 2-[(2R,5Z)-2-carboxy-4-methylthiazol-5(2H)-ylidene]ethyl phosphate is bound by residues Gly-174 and 194–195; that span reads IS.

It belongs to the thiamine-phosphate synthase family. The cofactor is Mg(2+).

It catalyses the reaction 2-[(2R,5Z)-2-carboxy-4-methylthiazol-5(2H)-ylidene]ethyl phosphate + 4-amino-2-methyl-5-(diphosphooxymethyl)pyrimidine + 2 H(+) = thiamine phosphate + CO2 + diphosphate. The catalysed reaction is 2-(2-carboxy-4-methylthiazol-5-yl)ethyl phosphate + 4-amino-2-methyl-5-(diphosphooxymethyl)pyrimidine + 2 H(+) = thiamine phosphate + CO2 + diphosphate. It carries out the reaction 4-methyl-5-(2-phosphooxyethyl)-thiazole + 4-amino-2-methyl-5-(diphosphooxymethyl)pyrimidine + H(+) = thiamine phosphate + diphosphate. It functions in the pathway cofactor biosynthesis; thiamine diphosphate biosynthesis; thiamine phosphate from 4-amino-2-methyl-5-diphosphomethylpyrimidine and 4-methyl-5-(2-phosphoethyl)-thiazole: step 1/1. In terms of biological role, condenses 4-methyl-5-(beta-hydroxyethyl)thiazole monophosphate (THZ-P) and 2-methyl-4-amino-5-hydroxymethyl pyrimidine pyrophosphate (HMP-PP) to form thiamine monophosphate (TMP). This is Thiamine-phosphate synthase from Methanosarcina barkeri (strain Fusaro / DSM 804).